Reading from the N-terminus, the 217-residue chain is Insulin-like growth factor 2.L (217 aa).

Positions 1–56 (MEQLSCKHRSSSMEAEAQLCRQTESRSTQLPRMSVMRHLFLLSITFLVYTLDSAKA) are cleaved as a signal peptide. A b region spans residues 57–83 (YRPTETLCGGELVDTLQFVCGDRGFYF). 3 disulfide bridges follow: Cys-64/Cys-103, Cys-76/Cys-116, and Cys-102/Cys-107. The c stretch occupies residues 84–96 (STNNGRSNRRSNR). The interval 97–117 (GIVEECCFRSCDLELLETYCA) is a. Positions 118 to 123 (KPSKNE) are d. Positions 124–217 (RDVSTAPATA…LQQTSEPSHN (94 aa)) are cleaved as a propeptide — e peptide.

The protein belongs to the insulin family.

It localises to the secreted. Its function is as follows. The insulin-like growth factors, isolated from plasma, are structurally and functionally related to insulin but have a much higher growth-promoting activity. Promotes anterior neural development. Acts as a ligand for integrin which is required for IGF2 signaling. In Xenopus laevis (African clawed frog), this protein is Insulin-like growth factor 2.L.